The chain runs to 356 residues: S-adenosylmethionine:tRNA ribosyltransferase-isomerase (356 aa).

Belongs to the QueA family. Monomer.

Its subcellular location is the cytoplasm. The catalysed reaction is 7-aminomethyl-7-carbaguanosine(34) in tRNA + S-adenosyl-L-methionine = epoxyqueuosine(34) in tRNA + adenine + L-methionine + 2 H(+). It participates in tRNA modification; tRNA-queuosine biosynthesis. Its function is as follows. Transfers and isomerizes the ribose moiety from AdoMet to the 7-aminomethyl group of 7-deazaguanine (preQ1-tRNA) to give epoxyqueuosine (oQ-tRNA). This is S-adenosylmethionine:tRNA ribosyltransferase-isomerase from Escherichia fergusonii (strain ATCC 35469 / DSM 13698 / CCUG 18766 / IAM 14443 / JCM 21226 / LMG 7866 / NBRC 102419 / NCTC 12128 / CDC 0568-73).